Consider the following 91-residue polypeptide: Small ribosomal subunit protein bS18 (91 aa).

The protein belongs to the bacterial ribosomal protein bS18 family. In terms of assembly, part of the 30S ribosomal subunit. Forms a tight heterodimer with protein bS6.

Its function is as follows. Binds as a heterodimer with protein bS6 to the central domain of the 16S rRNA, where it helps stabilize the platform of the 30S subunit. The chain is Small ribosomal subunit protein bS18 from Paraburkholderia xenovorans (strain LB400).